Here is a 504-residue protein sequence, read N- to C-terminus: Aspartyl/glutamyl-tRNA(Asn/Gln) amidotransferase subunit B (504 aa).

The protein belongs to the GatB/GatE family. GatB subfamily. Heterotrimer of A, B and C subunits.

It carries out the reaction L-glutamyl-tRNA(Gln) + L-glutamine + ATP + H2O = L-glutaminyl-tRNA(Gln) + L-glutamate + ADP + phosphate + H(+). It catalyses the reaction L-aspartyl-tRNA(Asn) + L-glutamine + ATP + H2O = L-asparaginyl-tRNA(Asn) + L-glutamate + ADP + phosphate + 2 H(+). Functionally, allows the formation of correctly charged Asn-tRNA(Asn) or Gln-tRNA(Gln) through the transamidation of misacylated Asp-tRNA(Asn) or Glu-tRNA(Gln) in organisms which lack either or both of asparaginyl-tRNA or glutaminyl-tRNA synthetases. The reaction takes place in the presence of glutamine and ATP through an activated phospho-Asp-tRNA(Asn) or phospho-Glu-tRNA(Gln). This chain is Aspartyl/glutamyl-tRNA(Asn/Gln) amidotransferase subunit B, found in Rhodococcus opacus (strain B4).